A 306-amino-acid chain; its full sequence is MELVFLGTGAGVPSRGRNVTSIALSMLNERKTIWLFDCGEATQHQIMRSQIKLSKLEKIFITHMHGDHIFGLPGLLSSRSFQGGDSTITIYGPAGIAEYVETSLRLSGTRLTYKIIFNEIEPGLIFEDKMFSVIADDLEHGVRSFGYRIVEKDKQGALNAEKLKAEGIEAGPIFQKLKNGEVVELEDGRVVDGKNYIGEPQKGKIISIFGDTKETASELELALNADILVHEATFEGDKGKMAGEYMHSTTLQAANLAKKANVKKLILTHISSRYDRDASKALLIEAKSVFENTEIAYDLAVFEVGE.

Zn(2+)-binding residues include His63, His65, Asp67, His68, His140, Asp211, and His269. The Proton acceptor role is filled by Asp67.

Belongs to the RNase Z family. In terms of assembly, homodimer. Requires Zn(2+) as cofactor.

It carries out the reaction Endonucleolytic cleavage of RNA, removing extra 3' nucleotides from tRNA precursor, generating 3' termini of tRNAs. A 3'-hydroxy group is left at the tRNA terminus and a 5'-phosphoryl group is left at the trailer molecule.. Functionally, zinc phosphodiesterase, which displays some tRNA 3'-processing endonuclease activity. Probably involved in tRNA maturation, by removing a 3'-trailer from precursor tRNA. In Listeria welshimeri serovar 6b (strain ATCC 35897 / DSM 20650 / CCUG 15529 / CIP 8149 / NCTC 11857 / SLCC 5334 / V8), this protein is Ribonuclease Z.